The sequence spans 236 residues: MGRPSKRIREIAKSLDAAKAYTIREAIDILKKCPPVKFDQTVEVSLKLGVDPRRSDQSVRGTVSLPNGTGKTMKILVFAKGDKVKEALEAGADYAGHDELLEKVNGGWTDFDAVVATPDMMREVGKLGKVLGPRGLMPTPKAGTVTTDIAKAIQELKAGKIEFKLDRHGVINNGVGKVSFESNKLEENIRAFLIAIQRAKPASAKGHYMRSLAISSTMGPGLKIDLRESDLAAKES.

The protein belongs to the universal ribosomal protein uL1 family. In terms of assembly, part of the 50S ribosomal subunit.

Functionally, binds directly to 23S rRNA. The L1 stalk is quite mobile in the ribosome, and is involved in E site tRNA release. Its function is as follows. Protein L1 is also a translational repressor protein, it controls the translation of the L11 operon by binding to its mRNA. The polypeptide is Large ribosomal subunit protein uL1 (Protochlamydia amoebophila (strain UWE25)).